Consider the following 316-residue polypeptide: Tetrahydromethanopterin S-methyltransferase subunit H (316 aa).

This sequence belongs to the MtrH family. In terms of assembly, the complex is composed of 8 subunits; MtrA, MtrB, MtrC, MtrD, MtrE, MtrF, MtrG and MtrH.

It catalyses the reaction 5-methyl-5,6,7,8-tetrahydromethanopterin + coenzyme M + 2 Na(+)(in) = 5,6,7,8-tetrahydromethanopterin + methyl-coenzyme M + 2 Na(+)(out). The protein operates within one-carbon metabolism; methanogenesis from CO(2); methyl-coenzyme M from 5,10-methylene-5,6,7,8-tetrahydromethanopterin: step 2/2. Functionally, part of a complex that catalyzes the formation of methyl-coenzyme M and tetrahydromethanopterin from coenzyme M and methyl-tetrahydromethanopterin. This is an energy-conserving, sodium-ion translocating step. MtrH catalyzes the transfer of the methyl group from methyl-tetrahydromethanopterin to the corrinoid prosthetic group of MtrA. The chain is Tetrahydromethanopterin S-methyltransferase subunit H from Methanosarcina barkeri (strain Fusaro / DSM 804).